Consider the following 605-residue polypeptide: MWTLVGWTILVAGLVAGIRCPDDQVCPVACCPDSGGASYSCCDPGVDLRTTALSGYLGRPCQSPANCPIGHSCVLTAAGTAACCPFSQAMACGDGHHCCPYGFHCSTDGGTCIQRPDIHLLGAVQCPGGEFECPDSSTCCHMLDGSWGCCPMPQASCCEDRVHCCPHGASCDLVHIRCVTALGSHPLTTKLPAQRTNYTGAEGTPVVSPGLLPAALPTSVICPDSRSQCPDDTTCCLLASGEYGCCPMPNAICCSDHLHCCPQDTVCDLRQSRCLSQNKAKTLLTKLPSWTVWDVECDQEVSCPEGQTCCRLQSGKWGCCPFPKAVCCEDHVHCCPEGFRCHTEKDTCEQGLLQVPWAQKTPAQPSRPSQPSPPGPPGPPSPPGPLRSEISCDEVVSCAPGNICCRLASGEWGCCPSSEGYLCMAGERCQVGDRLAPEKMAAHLMSLSQTTDVGCDQHASCPVGQTCCPKLGGGWACCQLPHAVCCEDGQHCCPAGYTCNVKARSCEKAADGAHLAAPLAVGSTGGVMDVACGDRHFCHDEQTCCRDSRGGWACCPFHQGVCCKDQRHCCPAGFHCESQGTRCVHKKSLLHWDSLPRPAAPRPRL.

The N-terminal stretch at 1–17 (MWTLVGWTILVAGLVAG) is a signal peptide. 2 disulfides stabilise this stretch: Cys-126–Cys-139 and Cys-133–Cys-149. N-linked (GlcNAc...) asparagine glycosylation occurs at Asn-197. Cystine bridges form between Cys-297–Cys-309, Cys-303–Cys-319, Cys-310–Cys-327, Cys-320–Cys-334, Cys-328–Cys-341, and Cys-335–Cys-348. A disordered region spans residues 359–386 (QKTPAQPSRPSQPSPPGPPGPPSPPGPL). Pro residues predominate over residues 368 to 385 (PSQPSPPGPPGPPSPPGP). Cystine bridges form between Cys-392-Cys-404 and Cys-398-Cys-414.

It belongs to the granulin family. Progranulin is secreted as a homodimer. Interacts with SLPI; interaction protects progranulin from proteolysis. Interacts (via region corresponding to granulin-7 peptide) with CTSD; stabilizes CTSD and increases its proteolytic activity. Interacts (via region corresponding to granulin-7 peptide) with SORT1; this interaction mediates endocytosis and lysosome delivery of progranulin; interaction occurs at the neuronal cell surface in a stressed nervous system. Interacts with PSAP; facilitates lysosomal delivery of progranulin from the extracellular space and the biosynthetic pathway. Forms a complex with PSAP and M6PR; PSAP bridges the binding between progranulin and M6PR. Forms a complex with PSAP and SORT1; progranulin bridges the interaction between PSAP and SORT1; facilitates lysosomal targeting of PSAP via SORT1; interaction enhances PSAP uptake in primary cortical neurons. Interacts (via regions corresponding to granulin-2 and granulin-7 peptides) with GBA1; this interaction prevents aggregation of GBA1-SCARB2 complex via interaction with HSPA1A upon stress. Interacts (via region corresponding to granulin-7 peptide) with HSPA1A; mediates recruitment of HSPA1A to GBA1 and prevents GBA1 aggregation in response to stress. Post-translationally, cleaved by ELANE; proteolysis is blocked by SLPI and is concentration- and time-dependent and induces CXCL8/IL-8 production; granulin-3 and granulin-4 are resistant to ELANE. Cleaved by CTSL in lysosome thus regulating the maturation and turnover of progranulin within the lysosome.

The protein localises to the secreted. Its subcellular location is the lysosome. Secreted protein that acts as a key regulator of lysosomal function and as a growth factor involved in inflammation, wound healing and cell proliferation. Regulates protein trafficking to lysosomes, and also the activity of lysosomal enzymes. Also facilitates the acidification of lysosomes, causing degradation of mature CTSD by CTSB. In addition, functions as a wound-related growth factor that acts directly on dermal fibroblasts and endothelial cells to promote division, migration and the formation of capillary-like tubule structures. Also promotes epithelial cell proliferation by blocking TNF-mediated neutrophil activation preventing release of oxidants and proteases. Moreover, modulates inflammation in neurons by preserving neurons survival, axonal outgrowth and neuronal integrity. Functionally, inhibits epithelial cell proliferation and induces epithelial cells to secrete IL-8. Its function is as follows. Stabilizes CTSD through interaction with CTSD leading to maintain its aspartic-type peptidase activity. In Cavia porcellus (Guinea pig), this protein is Progranulin (GRN).